The following is a 125-amino-acid chain: Salivary protein 15 Ipac-1 (125 aa).

Positions Met-1–Ala-15 are cleaved as a signal peptide. N-linked (GlcNAc...) asparagine glycosylation is found at Asn-82 and Asn-94. Residues Gly-106 to Cys-125 are CD4-binding.

The protein belongs to the salp15 family. Interacts with host CD4. Interacts with host DC-SIGN (CD209). Interacts with Borrelia outer surface protein C (OspC). Expressed in salivary glands.

The protein resides in the secreted. Its function is as follows. Salivary tick protein that downregulates host immune system by binding to both dendritic cells, and CD4(+) T cells. Specifically binds to the CD4 coreceptor on T cells. This interaction prevents the activation of the Src kinase, Lck, and its downstream substrate Zap-70, and results in deficient activation of PLCgamma1, the repression of calcium fluxes triggered by T-cell antigen receptor (TCR) ligation, and a subsequent reduction in interleukin-2 production. This salivary protein also binds to DC-SIGN (CD209) on dendritic cells (DC) and activates the Raf-1 kinase/MEK signaling pathway that results in down-regulating expression of pro-inflammatory cytokines. Furthermore, it inhibits T cell proliferation induced by DCs. It also inhibits in vitro keratinocyte inflammation induced by Borrelia burgdorferi or by the major outer surface protein (OspC) of Borrelia. In addition, it downregulates chemokines and monocyte chemoattractant protein 1, as well as several antimicrobial peptides such as defensins, cathelicidin, psoriasin, and RNase 7. Apart from its immunomodulatory activities, it is also associated with protection of Borrelia spirochetes from antibody-mediated killing through its binding to OspC. In vivo, tests on different immune disease animal models show promising therapeutic results, e.g., in inhibiting HIV infection, experimental autoimmune encephalomyelitis, transplantation rejection, and asthma. The protein is Salivary protein 15 Ipac-1 of Ixodes pacificus (Western black-legged tick).